A 498-amino-acid chain; its full sequence is Aspartyl/glutamyl-tRNA(Asn/Gln) amidotransferase subunit B (498 aa).

Belongs to the GatB/GatE family. GatB subfamily. In terms of assembly, heterotrimer of A, B and C subunits.

It carries out the reaction L-glutamyl-tRNA(Gln) + L-glutamine + ATP + H2O = L-glutaminyl-tRNA(Gln) + L-glutamate + ADP + phosphate + H(+). The enzyme catalyses L-aspartyl-tRNA(Asn) + L-glutamine + ATP + H2O = L-asparaginyl-tRNA(Asn) + L-glutamate + ADP + phosphate + 2 H(+). Functionally, allows the formation of correctly charged Asn-tRNA(Asn) or Gln-tRNA(Gln) through the transamidation of misacylated Asp-tRNA(Asn) or Glu-tRNA(Gln) in organisms which lack either or both of asparaginyl-tRNA or glutaminyl-tRNA synthetases. The reaction takes place in the presence of glutamine and ATP through an activated phospho-Asp-tRNA(Asn) or phospho-Glu-tRNA(Gln). This chain is Aspartyl/glutamyl-tRNA(Asn/Gln) amidotransferase subunit B, found in Erythrobacter litoralis (strain HTCC2594).